The primary structure comprises 505 residues: Aspartyl/glutamyl-tRNA(Asn/Gln) amidotransferase subunit B (505 aa).

Belongs to the GatB/GatE family. GatB subfamily. As to quaternary structure, heterotrimer of A, B and C subunits.

It catalyses the reaction L-glutamyl-tRNA(Gln) + L-glutamine + ATP + H2O = L-glutaminyl-tRNA(Gln) + L-glutamate + ADP + phosphate + H(+). It carries out the reaction L-aspartyl-tRNA(Asn) + L-glutamine + ATP + H2O = L-asparaginyl-tRNA(Asn) + L-glutamate + ADP + phosphate + 2 H(+). Functionally, allows the formation of correctly charged Asn-tRNA(Asn) or Gln-tRNA(Gln) through the transamidation of misacylated Asp-tRNA(Asn) or Glu-tRNA(Gln) in organisms which lack either or both of asparaginyl-tRNA or glutaminyl-tRNA synthetases. The reaction takes place in the presence of glutamine and ATP through an activated phospho-Asp-tRNA(Asn) or phospho-Glu-tRNA(Gln). This is Aspartyl/glutamyl-tRNA(Asn/Gln) amidotransferase subunit B from Kineococcus radiotolerans (strain ATCC BAA-149 / DSM 14245 / SRS30216).